Reading from the N-terminus, the 935-residue chain is Inter-alpha-trypsin inhibitor heavy chain H2 (935 aa).

The N-terminal stretch at 1-18 is a signal peptide; it reads MKGLTCFLLCFLLSEAQG. Residues 19–53 constitute a propeptide that is removed on maturation; it reads FEIPTNGLSEFAEYGDLAELALGKFHVVPGNRRSQ. In terms of domain architecture, VIT spans 45 to 174; it reads VVPGNRRSQE…KVQFELHYQE (130 aa). Residue asparagine 107 is glycosylated (N-linked (GlcNAc...) asparagine). Glutamate 271 carries the 4-carboxyglutamate modification. Positions 297–457 constitute a VWFA domain; that stretch reads PKNILFVIDV…YDFLKRLSND (161 aa). N-linked (GlcNAc...) asparagine glycosylation is present at asparagine 434. Serine 455 is modified (phosphoserine). Residue aspartate 691 is modified to Aspartate 1-(chondroitin 4-sulfate)-ester. The propeptide occupies 692–935; sequence PHFIIYLPRS…PLLYSFLKRP (244 aa). Serine 875 carries the phosphoserine modification.

It belongs to the ITIH family. In terms of assembly, I-alpha-I plasma protease inhibitors are assembled from one or two heavy chains (HC) and one light chain, bikunin. Inter-alpha-inhibitor (I-alpha-I) is composed of ITIH1/HC1, ITIH2/HC2 and bikunin. In terms of processing, heavy chains are linked to bikunin via chondroitin 4-sulfate esterified to the alpha-carboxyl of the C-terminal aspartate after propeptide cleavage. Phosphorylated by FAM20C in the extracellular medium.

The protein resides in the secreted. In terms of biological role, may act as a carrier of hyaluronan in serum or as a binding protein between hyaluronan and other matrix protein, including those on cell surfaces in tissues to regulate the localization, synthesis and degradation of hyaluronan which are essential to cells undergoing biological processes. This is Inter-alpha-trypsin inhibitor heavy chain H2 (ITIH2) from Sus scrofa (Pig).